Here is a 128-residue protein sequence, read N- to C-terminus: Small ribosomal subunit protein uS11 (128 aa).

This sequence belongs to the universal ribosomal protein uS11 family. Part of the 30S ribosomal subunit. Interacts with proteins S7 and S18. Binds to IF-3.

Functionally, located on the platform of the 30S subunit, it bridges several disparate RNA helices of the 16S rRNA. Forms part of the Shine-Dalgarno cleft in the 70S ribosome. The protein is Small ribosomal subunit protein uS11 of Onion yellows phytoplasma (strain OY-M).